Reading from the N-terminus, the 156-residue chain is Lipoprotein signal peptidase (156 aa).

Transmembrane regions (helical) follow at residues 5 to 25, 64 to 84, and 89 to 109; these read FKFI…DQWV, YLHL…KTLL, and IAFG…FIYG. Residues Asp113 and Asp130 contribute to the active site. Residues 122–142 form a helical membrane-spanning segment; that stretch reads NFAIFNVADVMINISVALILI.

It belongs to the peptidase A8 family.

It localises to the cell inner membrane. The catalysed reaction is Release of signal peptides from bacterial membrane prolipoproteins. Hydrolyzes -Xaa-Yaa-Zaa-|-(S,diacylglyceryl)Cys-, in which Xaa is hydrophobic (preferably Leu), and Yaa (Ala or Ser) and Zaa (Gly or Ala) have small, neutral side chains.. It participates in protein modification; lipoprotein biosynthesis (signal peptide cleavage). In terms of biological role, this protein specifically catalyzes the removal of signal peptides from prolipoproteins. This is Lipoprotein signal peptidase from Campylobacter jejuni subsp. doylei (strain ATCC BAA-1458 / RM4099 / 269.97).